Reading from the N-terminus, the 471-residue chain is Proline--tRNA ligase (471 aa).

The protein belongs to the class-II aminoacyl-tRNA synthetase family. ProS type 3 subfamily. In terms of assembly, homodimer.

It localises to the cytoplasm. It catalyses the reaction tRNA(Pro) + L-proline + ATP = L-prolyl-tRNA(Pro) + AMP + diphosphate. Its function is as follows. Catalyzes the attachment of proline to tRNA(Pro) in a two-step reaction: proline is first activated by ATP to form Pro-AMP and then transferred to the acceptor end of tRNA(Pro). The polypeptide is Proline--tRNA ligase (Archaeoglobus fulgidus (strain ATCC 49558 / DSM 4304 / JCM 9628 / NBRC 100126 / VC-16)).